A 168-amino-acid polypeptide reads, in one-letter code: Diphosphoinositol polyphosphate phosphohydrolase 1 (168 aa).

An N-acetylmethionine modification is found at Met1. Residues Arg10, 18-20 (KKR), and 39-41 (SSR) contribute to the substrate site. The Nudix hydrolase domain maps to 17–144 (YKKRAACLCF…VQASYFETLR (128 aa)). Mg(2+) is bound by residues Gly50 and Glu66. The Nudix box motif lies at 51-72 (GGMEPEEEPSVAAVREVCEEAG). Glu69 (proton acceptor) is an active-site residue. Glu70 contacts Mg(2+). Substrate-binding positions include 89–91 (RKH), Arg115, and Lys133.

The protein belongs to the Nudix hydrolase family. DIPP subfamily. Monomer. Mg(2+) is required as a cofactor. It depends on Mn(2+) as a cofactor. Zn(2+) serves as cofactor. As to expression, present in heart, lung, liver and spleen (at protein level). Widely expressed.

The protein resides in the cytoplasm. It localises to the nucleus. The enzyme catalyses diphospho-myo-inositol polyphosphate + H2O = myo-inositol polyphosphate + phosphate.. It carries out the reaction 5-diphospho-1D-myo-inositol 1,2,3,4,6-pentakisphosphate + H2O = 1D-myo-inositol hexakisphosphate + phosphate + H(+). The catalysed reaction is 3,5-bis(diphospho)-1D-myo-inositol 1,2,4,6-tetrakisphosphate + H2O = 3-diphospho-1D-myo-inositol 1,2,4,5,6-pentakisphosphate + phosphate + 2 H(+). It catalyses the reaction [phosphate](n+1) + n H2O = (n+1) phosphate + n H(+). The enzyme catalyses P(1),P(5)-bis(5'-adenosyl) pentaphosphate + H2O = ADP + ATP + 2 H(+). It carries out the reaction P(1),P(6)-bis(5'-adenosyl) hexaphosphate + H2O = 2 ATP + 2 H(+). The catalysed reaction is P(1),P(4)-bis(5'-adenosyl) tetraphosphate + H2O = AMP + ATP + 2 H(+). It catalyses the reaction a 5'-end (N(7)-methyl 5'-triphosphoguanosine)-ribonucleoside in mRNA + H2O = N(7)-methyl-GMP + a 5'-end diphospho-ribonucleoside in mRNA + 2 H(+). The enzyme catalyses a 5'-end (N(7)-methyl 5'-triphosphoguanosine)-ribonucleoside in mRNA + H2O = N(7)-methyl-GDP + a 5'-end phospho-ribonucleoside in mRNA + 2 H(+). Cleaves a beta-phosphate from the diphosphate groups in PP-InsP5 (diphosphoinositol pentakisphosphate) and [PP]2-InsP4 (bisdiphosphoinositol tetrakisphosphate), suggesting that it may play a role in signal transduction. InsP6 (inositol hexakisphosphate) is not a substrate. Also able to catalyze the hydrolysis of dinucleoside oligophosphates, with diadenosine 5',5'''-P1,P6-hexaphosphate (Ap6A) and diadenosine 5',5'''- P1,P5-pentaphosphate (Ap5A) being the preferred substrates. The major reaction products are ADP and p4a from Ap6A and ADP and ATP from Ap5A. Also able to hydrolyze 5- phosphoribose 1-diphosphate. Acts as a negative regulator of the ERK1/2 pathway. Acts as a decapping enzyme that can hydrolyze both monomethylated and unmethylated capped RNAs. Hydrolyzes monomethylated capped RNA after both the alpha- and beta-phosphates generating m7GMP + ppRNA and m7GDP + pRNA. Modulates the stability of a subset of mRNAs implicated in cell motility. Divalent cations zinc, magnesium and manganese determine its substrate specificity. Exhibits diphosphoinositol polyphosphate phosphohydrolase in the presence of magnesium ions, diadenosine hexaphosphate hydrolase activity in the presence of manganese ions and endopolyphosphatase activity in the presence of zinc ions. Plays an important role in limiting DNA damage and maintaining cell survival upon oxidative stress via its endopolyphosphatase activity. This chain is Diphosphoinositol polyphosphate phosphohydrolase 1, found in Mus musculus (Mouse).